A 138-amino-acid chain; its full sequence is Aspartate 1-decarboxylase (138 aa).

Ser-25 acts as the Schiff-base intermediate with substrate; via pyruvic acid in catalysis. The residue at position 25 (Ser-25) is a Pyruvic acid (Ser). Thr-57 contacts substrate. Tyr-58 serves as the catalytic Proton donor. 73–75 (GAA) contacts substrate. Residues 117-138 (VDADPTAPPAPGLERSPLAEPV) form a disordered region.

It belongs to the PanD family. As to quaternary structure, heterooctamer of four alpha and four beta subunits. Requires pyruvate as cofactor. Is synthesized initially as an inactive proenzyme, which is activated by self-cleavage at a specific serine bond to produce a beta-subunit with a hydroxyl group at its C-terminus and an alpha-subunit with a pyruvoyl group at its N-terminus.

The protein resides in the cytoplasm. It carries out the reaction L-aspartate + H(+) = beta-alanine + CO2. It functions in the pathway cofactor biosynthesis; (R)-pantothenate biosynthesis; beta-alanine from L-aspartate: step 1/1. In terms of biological role, catalyzes the pyruvoyl-dependent decarboxylation of aspartate to produce beta-alanine. This chain is Aspartate 1-decarboxylase, found in Clavibacter michiganensis subsp. michiganensis (strain NCPPB 382).